We begin with the raw amino-acid sequence, 834 residues long: Protein SEY1 (834 aa).

The disordered stretch occupies residues Met-1 to Ser-26. The Cytoplasmic portion of the chain corresponds to Met-1–Gln-733. Residues Pro-63–Tyr-296 enclose the GB1/RHD3-type G domain. Position 73–80 (Gly-73–Ser-80) interacts with GTP. Positions Val-659–Glu-688 form a coiled coil. Positions Thr-670 to Asp-689 are disordered. The segment covering Glu-676–Asp-689 has biased composition (acidic residues). The helical transmembrane segment at Ile-734–Leu-754 threads the bilayer. Residues Arg-755 to Pro-757 are Lumenal-facing. Residues Phe-758–Leu-778 traverse the membrane as a helical segment. Residues Leu-779–Thr-834 lie on the Cytoplasmic side of the membrane.

The protein belongs to the TRAFAC class dynamin-like GTPase superfamily. GB1/RHD3 GTPase family. RHD3 subfamily.

It is found in the endoplasmic reticulum membrane. Cooperates with the reticulon proteins and tubule-shaping DP1 family proteins to generate and maintain the structure of the tubular endoplasmic reticulum network. Has GTPase activity, which is required for its function in ER organization. This is Protein SEY1 from Clavispora lusitaniae (strain ATCC 42720) (Yeast).